A 515-amino-acid chain; its full sequence is Maturase K (515 aa).

The protein belongs to the intron maturase 2 family. MatK subfamily.

The protein localises to the plastid. It is found in the chloroplast. In terms of biological role, usually encoded in the trnK tRNA gene intron. Probably assists in splicing its own and other chloroplast group II introns. This is Maturase K from Pinus pinea (Italian stone pine).